Reading from the N-terminus, the 496-residue chain is uncharacterized protein (496 aa).

The next 13 helical transmembrane spans lie at 5-25 (LTAL…GFLA), 45-65 (FGGL…YTFL), 77-97 (VAFF…FFLP), 127-147 (LVAI…LSGI), 161-181 (VKFV…FSGI), 193-213 (ILVW…HFNG), 239-259 (IPWF…WAHA), 278-298 (FLPL…IAFL), 325-345 (FAYA…AIGA), 374-394 (MVFV…TALV), 396-416 (LQLL…VSLF), 424-444 (ATVI…ITQS), and 450-470 (EGFW…PLFV).

It belongs to the sodium:solute symporter (SSF) (TC 2.A.21) family.

Its subcellular location is the cell membrane. This is an uncharacterized protein from Bacillus subtilis (strain 168).